A 595-amino-acid polypeptide reads, in one-letter code: Indole-3-acetic acid-amido synthetase GH3.3 (595 aa).

Belongs to the IAA-amido conjugating enzyme family.

Functionally, catalyzes the synthesis of indole-3-acetic acid (IAA)-amino acid conjugates, providing a mechanism for the plant to cope with the presence of excess auxin. Strongly reactive with Glu, Gln, Trp, Asp, Ala, Leu, Phe, Gly, Tyr, Met, Ile and Val. Little or no product formation with His, Ser, Thr, Arg, Lys, or Cys. Also active on pyruvic and butyric acid analogs of IAA, PAA and the synthetic auxin naphthaleneacetic acid (NAA). The two chlorinated synthetic auxin herbicides 2,4-D and 3,6-dichloro-o-anisic acid (dicamba) cannot be used as substrates. The sequence is that of Indole-3-acetic acid-amido synthetase GH3.3 (GH3.3) from Arabidopsis thaliana (Mouse-ear cress).